A 126-amino-acid polypeptide reads, in one-letter code: Small ribosomal subunit protein bS6 (126 aa).

The tract at residues 101 to 126 (VMMKAKEERTAKREDAAPRAEEAAAE) is disordered. Basic and acidic residues predominate over residues 104–126 (KAKEERTAKREDAAPRAEEAAAE).

This sequence belongs to the bacterial ribosomal protein bS6 family.

In terms of biological role, binds together with bS18 to 16S ribosomal RNA. The protein is Small ribosomal subunit protein bS6 of Aliivibrio salmonicida (strain LFI1238) (Vibrio salmonicida (strain LFI1238)).